The sequence spans 527 residues: Serine/threonine-protein kinase NLK (527 aa).

Sufficient for interaction with DAPK3 regions lie at residues 1–125 (MSLC…KAHH) and 124–416 (HHHQ…SKRI). Required for interaction with TAB2 stretches follow at residues 1 to 304 (MSLC…VVTQ) and 434 to 527 (YHTC…LVWE). Disordered stretches follow at residues 22–72 (AAAA…SSAA) and 90–140 (QQPY…DIEP). Positions 26–54 (GHHHHHHHHLPHLPPPHLHHHHHPQHHLH) are enriched in basic residues. Positions 103 to 119 (PGPAAAAPAQVQAAAAA) are enriched in low complexity. Over residues 122–131 (KAHHHQHSHH) the composition is skewed to basic residues. Positions 138 to 427 (IEPDRPIGYG…AKDALAHPYL (290 aa)) constitute a Protein kinase domain. ATP-binding positions include 144-152 (IGYGAFGVV) and K167. The active-site Proton acceptor is the D264. Residue T298 is modified to Phosphothreonine; by autocatalysis. A TQE motif is present at residues 298-300 (TQE). A required for homodimerization and kinase activation and localization to the nucleus region spans residues 428–527 (DEGRLRYHTC…EMPPSPLVWE (100 aa)). A Phosphoserine modification is found at S522.

It belongs to the protein kinase superfamily. CMGC Ser/Thr protein kinase family. MAP kinase subfamily. Homodimer. Homodimerization is required for intermolecular autophosphorylation, kinase activation and nuclear localization. May interact with components of cullin-RING-based SCF (SKP1-CUL1-F-box protein) E3 ubiquitin-protein ligase complexes. Interacts with LEF1, MEF2A, MYBL1 and MYBL2. Interacts with the upstream activating kinases HIPK2 and MAP3K7/TAK1. Interaction with MAP3K7/TAK1 seems to be indirect, and may be mediated by other proteins such as STAT3, TAB1 and TAB2. Interacts with and phosphorylates a number of transcription factors including FOXO1, FOXO3, FOXO4, MYB, NOTCH1 and TCF7L2/TCF4. Interacts with DAPK3/ZIPK, and this interaction may disrupt interaction with transcription factors such as TCF7L2/TCF4. Interacts with RNF138/NARF. Interacts with ATF5; the interaction stabilizes ATF5 at the protein level in a kinase-independent manner. Requires Mg(2+) as cofactor. In terms of processing, phosphorylated on Thr-298. Intermolecular autophosphorylation on Thr-298 activates the enzyme.

It is found in the nucleus. It localises to the cytoplasm. It catalyses the reaction L-seryl-[protein] + ATP = O-phospho-L-seryl-[protein] + ADP + H(+). The enzyme catalyses L-threonyl-[protein] + ATP = O-phospho-L-threonyl-[protein] + ADP + H(+). With respect to regulation, activated by dimerization and subsequent intermolecular autophosphorylation on Thr-298. Activated by the non-canonical Wnt signaling pathway, in which WNT5A treatment leads to activation of MAP3K7/TAK1 and HIPK2, which subsequently phosphorylates and activates this protein. Other cytokines such as IL6 may also activate this regulatory circuit. Its function is as follows. Serine/threonine-protein kinase that regulates a number of transcription factors with key roles in cell fate determination. Positive effector of the non-canonical Wnt signaling pathway, acting downstream of WNT5A, MAP3K7/TAK1 and HIPK2. Negative regulator of the canonical Wnt/beta-catenin signaling pathway. Binds to and phosphorylates TCF7L2/TCF4 and LEF1, promoting the dissociation of the TCF7L2/LEF1/beta-catenin complex from DNA, as well as the ubiquitination and subsequent proteolysis of LEF1. Together these effects inhibit the transcriptional activation of canonical Wnt/beta-catenin target genes. Negative regulator of the Notch signaling pathway. Binds to and phosphorylates NOTCH1, thereby preventing the formation of a transcriptionally active ternary complex of NOTCH1, RBPJ/RBPSUH and MAML1. Negative regulator of the MYB family of transcription factors. Phosphorylation of MYB leads to its subsequent proteolysis while phosphorylation of MYBL1 and MYBL2 inhibits their interaction with the coactivator CREBBP. Other transcription factors may also be inhibited by direct phosphorylation of CREBBP itself. Acts downstream of IL6 and MAP3K7/TAK1 to phosphorylate STAT3, which is in turn required for activation of NLK by MAP3K7/TAK1. Upon IL1B stimulus, cooperates with ATF5 to activate the transactivation activity of C/EBP subfamily members. Phosphorylates ATF5 but also stabilizes ATF5 protein levels in a kinase-independent manner. Acts as an inhibitor of the mTORC1 complex in response to osmotic stress by mediating phosphorylation of RPTOR, thereby preventing recruitment of the mTORC1 complex to lysosomes. This Homo sapiens (Human) protein is Serine/threonine-protein kinase NLK (NLK).